The sequence spans 529 residues: Peptide chain release factor 3 (529 aa).

A tr-type G domain is found at 11–280 (AKRRTFAIIS…GLVEWAPAPM (270 aa)). Residues 20 to 27 (SHPDAGKT), 88 to 92 (DTPGH), and 142 to 145 (NKLD) contribute to the GTP site.

Belongs to the TRAFAC class translation factor GTPase superfamily. Classic translation factor GTPase family. PrfC subfamily.

It is found in the cytoplasm. Increases the formation of ribosomal termination complexes and stimulates activities of RF-1 and RF-2. It binds guanine nucleotides and has strong preference for UGA stop codons. It may interact directly with the ribosome. The stimulation of RF-1 and RF-2 is significantly reduced by GTP and GDP, but not by GMP. The chain is Peptide chain release factor 3 from Klebsiella pneumoniae (strain 342).